The chain runs to 68 residues: Serine rich endogenous peptide 13 (68 aa).

An N-terminal signal peptide occupies residues 1 to 31 (MATKASNLVVFLLSLLLLFLLISFQVGVADA). The tract at residues 33-68 (RNKRQGQEQRVDYDYPRPPTAPIYLPPSKSRKGKGP) is disordered. The span at 37–47 (QGQEQRVDYDY) shows a compositional bias: basic and acidic residues. Over residues 48 to 57 (PRPPTAPIYL) the composition is skewed to pro residues. An SCOOP motif motif is present at residues 54-68 (PIYLPPSKSRKGKGP). Positions 60–62 (SKS) match the SxS motif essential for MIK2 binding motif.

This sequence belongs to the serine rich endogenous peptide (SCOOP) phytocytokine family. Interacts with MIK2 (via extracellular leucine-rich repeat domain); this interaction triggers the formation of complex between MIK2 and the BAK1/SERK3 and SERK4 coreceptors, and subsequent BAK1 activation by phosphorylation. As to expression, mostly expressed in stems and flowers and, to a lower extent, in seedlings shoots, roots, siliques, seeds and leaves.

Its subcellular location is the cell membrane. The protein localises to the secreted. The protein resides in the extracellular space. It is found in the apoplast. In terms of biological role, brassicaceae-specific phytocytokine (plant endogenous peptide released into the apoplast) perceived by MIK2 in a BAK1/SERK3 and SERK4 coreceptors-dependent manner, that modulates various physiological and antimicrobial processes including growth prevention and reactive oxygen species (ROS) response regulation. Promotes the expression of immune-related marker genes (e.g. WRKY30, WRKY33 and CYP81F2) in a MIK2-dependent manner. Inhibits root growth and regulates root meristems. Prevents general growth and development. Exhibits antibacterial effects against Pseudomonas syringae pv. tomato DC3000, Ralstonia solanacearum, Bacillus subtilis and Agrobacterium tumefaciens, thus being an antimicrobial peptide (AMP). This is Serine rich endogenous peptide 13 from Arabidopsis thaliana (Mouse-ear cress).